We begin with the raw amino-acid sequence, 84 residues long: NAD(P)H-quinone oxidoreductase subunit O (84 aa).

This sequence belongs to the complex I NdhO subunit family. In terms of assembly, NDH-1 can be composed of about 15 different subunits; different subcomplexes with different compositions have been identified which probably have different functions.

Its subcellular location is the cellular thylakoid membrane. The enzyme catalyses a plastoquinone + NADH + (n+1) H(+)(in) = a plastoquinol + NAD(+) + n H(+)(out). It catalyses the reaction a plastoquinone + NADPH + (n+1) H(+)(in) = a plastoquinol + NADP(+) + n H(+)(out). In terms of biological role, NDH-1 shuttles electrons from an unknown electron donor, via FMN and iron-sulfur (Fe-S) centers, to quinones in the respiratory and/or the photosynthetic chain. The immediate electron acceptor for the enzyme in this species is believed to be plastoquinone. Couples the redox reaction to proton translocation, and thus conserves the redox energy in a proton gradient. Cyanobacterial NDH-1 also plays a role in inorganic carbon-concentration. In Parasynechococcus marenigrum (strain WH8102), this protein is NAD(P)H-quinone oxidoreductase subunit O.